Reading from the N-terminus, the 408-residue chain is Arginine deiminase (408 aa).

The active-site Amidino-cysteine intermediate is Cys397.

This sequence belongs to the arginine deiminase family.

Its subcellular location is the cytoplasm. The enzyme catalyses L-arginine + H2O = L-citrulline + NH4(+). Its pathway is amino-acid degradation; L-arginine degradation via ADI pathway; carbamoyl phosphate from L-arginine: step 1/2. The chain is Arginine deiminase from Listeria innocua serovar 6a (strain ATCC BAA-680 / CLIP 11262).